We begin with the raw amino-acid sequence, 421 residues long: Gamma-glutamyl phosphate reductase (421 aa).

The protein belongs to the gamma-glutamyl phosphate reductase family.

It localises to the cytoplasm. The enzyme catalyses L-glutamate 5-semialdehyde + phosphate + NADP(+) = L-glutamyl 5-phosphate + NADPH + H(+). Its pathway is amino-acid biosynthesis; L-proline biosynthesis; L-glutamate 5-semialdehyde from L-glutamate: step 2/2. Functionally, catalyzes the NADPH-dependent reduction of L-glutamate 5-phosphate into L-glutamate 5-semialdehyde and phosphate. The product spontaneously undergoes cyclization to form 1-pyrroline-5-carboxylate. This Dinoroseobacter shibae (strain DSM 16493 / NCIMB 14021 / DFL 12) protein is Gamma-glutamyl phosphate reductase.